The primary structure comprises 853 residues: Dynein axonemal assembly factor 5 (853 aa).

Alanine 2 carries the post-translational modification N-acetylalanine. 9 HEAT repeats span residues glycine 69–arginine 107, histidine 200–glycine 238, serine 240–aspartate 276, tyrosine 278–glutamine 316, arginine 374–lysine 412, glycine 597–aspartate 636, glutamine 694–aspartate 732, proline 736–serine 774, and glutamine 782–aspartate 820.

It belongs to the DNAAF5 family. As to quaternary structure, interacts with DNAI2; probably involved in outer arm dynein assembly. As to expression, expressed in ciliated cells including ependymal cells lining the lateral ventricles and multiciliated epithelium of oviduct ampulla.

It localises to the cytoplasm. Its subcellular location is the cytoplasmic granule. Its function is as follows. Cytoplasmic protein involved in the delivery of the dynein machinery to the motile cilium. It is required for the assembly of the axonemal dynein inner and outer arms, two structures attached to the peripheral outer doublet A microtubule of the axoneme, that play a crucial role in cilium motility. The protein is Dynein axonemal assembly factor 5 of Mus musculus (Mouse).